Consider the following 796-residue polypeptide: Histone acetyltransferase KAT2B (796 aa).

3 disordered regions span residues 1–32, 77–97, and 371–408; these read MSESTGIPQGSPAVGAAGSAPAAPGVGGTECS, WKSQNPPPTPPPPTPPRAEQP, and AGGGSVSPARKTASVLEPNPGGEKRKPAEPLSHEDSKR. Over residues 10–24 the composition is skewed to low complexity; sequence GSPAVGAAGSAPAAP. A compositionally biased stretch (pro residues) spans 81–94; the sequence is NPPPTPPPPTPPRA. Positions 392 to 408 are enriched in basic and acidic residues; that stretch reads GEKRKPAEPLSHEDSKR. The N-acetyltransferase domain occupies 469–617; it reads LNQKPNKKIL…GATLMGCELN (149 aa). The active-site Proton donor/acceptor is the Glu536. Acetyl-CoA is bound by residues 540–542, 547–553, and 578–581; these read CAV, QVKGYGT, and YAIG. Residues 687-791 enclose the Bromo domain; that stretch reads KDPDQLYSTL…KFFYTKIKEA (105 aa).

The protein belongs to the acetyltransferase family. GCN5 subfamily.

It localises to the nucleus. Its subcellular location is the cytoplasm. The protein resides in the cytoskeleton. It is found in the microtubule organizing center. The protein localises to the centrosome. It catalyses the reaction L-lysyl-[histone] + acetyl-CoA = N(6)-acetyl-L-lysyl-[histone] + CoA + H(+). The enzyme catalyses L-lysyl-[protein] + acetyl-CoA = N(6)-acetyl-L-lysyl-[protein] + CoA + H(+). The catalysed reaction is spermidine + acetyl-CoA = N(8)-acetylspermidine + CoA + H(+). In terms of biological role, functions as a histone acetyltransferase (HAT) to promote transcriptional activation. Has significant histone acetyltransferase activity with core histones (H3 and H4), and also with nucleosome core particles. Has a a strong preference for acetylation of H3 at 'Lys-9' (H3K9ac). Also acetylates non-histone proteins. Involved in heart and limb development by mediating acetylation of tbx5. Also acetylates spermidine. Together with kat2a, required for growth and differentiation of craniofacial cartilage and bone by regulating acetylation of histone H3 at 'Lys-9' (H3K9ac). This is Histone acetyltransferase KAT2B from Danio rerio (Zebrafish).